Here is a 156-residue protein sequence, read N- to C-terminus: ATP synthase subunit b (156 aa).

A helical transmembrane segment spans residues leucine 7–proline 27.

Belongs to the ATPase B chain family. As to quaternary structure, F-type ATPases have 2 components, F(1) - the catalytic core - and F(0) - the membrane proton channel. F(1) has five subunits: alpha(3), beta(3), gamma(1), delta(1), epsilon(1). F(0) has three main subunits: a(1), b(2) and c(10-14). The alpha and beta chains form an alternating ring which encloses part of the gamma chain. F(1) is attached to F(0) by a central stalk formed by the gamma and epsilon chains, while a peripheral stalk is formed by the delta and b chains.

It localises to the cell inner membrane. Its function is as follows. F(1)F(0) ATP synthase produces ATP from ADP in the presence of a proton or sodium gradient. F-type ATPases consist of two structural domains, F(1) containing the extramembraneous catalytic core and F(0) containing the membrane proton channel, linked together by a central stalk and a peripheral stalk. During catalysis, ATP synthesis in the catalytic domain of F(1) is coupled via a rotary mechanism of the central stalk subunits to proton translocation. Functionally, component of the F(0) channel, it forms part of the peripheral stalk, linking F(1) to F(0). In Ralstonia pickettii (strain 12J), this protein is ATP synthase subunit b.